Here is a 504-residue protein sequence, read N- to C-terminus: Anaerobic nitric oxide reductase transcription regulator NorR (504 aa).

4-aspartylphosphate is present on D57. The Sigma-54 factor interaction domain maps to 187–416 (MIGLSPGMTQ…LEHAIHRAVV (230 aa)). ATP-binding positions include 215-222 (GETGTGKE) and 278-287 (ADNGTLFLDE). The segment at residues 479–498 (WAACARMLETDVANLHRLAK) is a DNA-binding region (H-T-H motif).

It functions in the pathway nitrogen metabolism; nitric oxide reduction. In terms of biological role, required for the expression of anaerobic nitric oxide (NO) reductase, acts as a transcriptional activator for at least the norVW operon. Activation also requires sigma-54. The polypeptide is Anaerobic nitric oxide reductase transcription regulator NorR (Escherichia coli O6:H1 (strain CFT073 / ATCC 700928 / UPEC)).